Consider the following 428-residue polypeptide: Enolase (428 aa).

Q163 contacts (2R)-2-phosphoglycerate. Catalysis depends on E205, which acts as the Proton donor. Mg(2+)-binding residues include D242, E283, and D310. 4 residues coordinate (2R)-2-phosphoglycerate: K335, R364, S365, and K386. K335 acts as the Proton acceptor in catalysis.

This sequence belongs to the enolase family. Mg(2+) serves as cofactor.

The protein resides in the cytoplasm. The protein localises to the secreted. Its subcellular location is the cell surface. It carries out the reaction (2R)-2-phosphoglycerate = phosphoenolpyruvate + H2O. It functions in the pathway carbohydrate degradation; glycolysis; pyruvate from D-glyceraldehyde 3-phosphate: step 4/5. Its function is as follows. Catalyzes the reversible conversion of 2-phosphoglycerate (2-PG) into phosphoenolpyruvate (PEP). It is essential for the degradation of carbohydrates via glycolysis. This is Enolase from Streptomyces avermitilis (strain ATCC 31267 / DSM 46492 / JCM 5070 / NBRC 14893 / NCIMB 12804 / NRRL 8165 / MA-4680).